A 594-amino-acid chain; its full sequence is ATP-dependent RNA helicase DBP9 (594 aa).

A Q motif motif is present at residues 15 to 43 (SSFDSFHLDSRLSQAIRSIGFKHPTLIQS). The region spanning 47 to 229 (PLALQEKRDI…QQFCRSPAIL (183 aa)) is the Helicase ATP-binding domain. 60 to 67 (ASTGSGKT) is a binding site for ATP. The DEAD box signature appears at 175–178 (DEVD). Residues 242-474 (KLIQYYVKVG…PYNFDIKQVE (233 aa)) enclose the Helicase C-terminal domain. The disordered stretch occupies residues 562–594 (PFHKNSHRKNGRVVKKKGNVQRKGKSDPLKSFK). The segment covering 565 to 584 (KNSHRKNGRVVKKKGNVQRK) has biased composition (basic residues). Over residues 585 to 594 (GKSDPLKSFK) the composition is skewed to basic and acidic residues.

It belongs to the DEAD box helicase family. DDX56/DBP9 subfamily.

The protein localises to the nucleus. It is found in the nucleolus. It catalyses the reaction ATP + H2O = ADP + phosphate + H(+). Functionally, ATP-binding RNA helicase involved in the biogenesis of 60S ribosomal subunits and is required for the normal formation of 25S and 5.8S rRNAs. The chain is ATP-dependent RNA helicase DBP9 (DBP9) from Kluyveromyces lactis (strain ATCC 8585 / CBS 2359 / DSM 70799 / NBRC 1267 / NRRL Y-1140 / WM37) (Yeast).